A 421-amino-acid chain; its full sequence is NADH-quinone oxidoreductase subunit F 2 (421 aa).

Position 53–62 (53–62 (GRGGAGFPTG)) interacts with NAD(+). An FMN-binding site is contributed by 165–212 (GAGAYICGEETAMLESLEGKRAQPRLKPPFPAVAGLYASPTVINNVET). Residues C342, C345, C348, and C388 each contribute to the [4Fe-4S] cluster site.

It belongs to the complex I 51 kDa subunit family. FMN is required as a cofactor. [4Fe-4S] cluster serves as cofactor.

It catalyses the reaction a quinone + NADH + 5 H(+)(in) = a quinol + NAD(+) + 4 H(+)(out). In terms of biological role, NDH-1 shuttles electrons from NADH, via FMN and iron-sulfur (Fe-S) centers, to quinones in the respiratory chain. The immediate electron acceptor for the enzyme in this species is believed to be ubiquinone. Couples the redox reaction to proton translocation (for every two electrons transferred, four hydrogen ions are translocated across the cytoplasmic membrane), and thus conserves the redox energy in a proton gradient. This Rhizobium meliloti (strain 1021) (Ensifer meliloti) protein is NADH-quinone oxidoreductase subunit F 2 (nuoF2).